We begin with the raw amino-acid sequence, 294 residues long: 4-hydroxy-tetrahydrodipicolinate synthase (294 aa).

T44 provides a ligand contact to pyruvate. Y132 (proton donor/acceptor) is an active-site residue. The active-site Schiff-base intermediate with substrate is K161. I203 lines the pyruvate pocket.

Belongs to the DapA family. In terms of assembly, homotetramer; dimer of dimers.

The protein localises to the cytoplasm. The catalysed reaction is L-aspartate 4-semialdehyde + pyruvate = (2S,4S)-4-hydroxy-2,3,4,5-tetrahydrodipicolinate + H2O + H(+). Its pathway is amino-acid biosynthesis; L-lysine biosynthesis via DAP pathway; (S)-tetrahydrodipicolinate from L-aspartate: step 3/4. Catalyzes the condensation of (S)-aspartate-beta-semialdehyde [(S)-ASA] and pyruvate to 4-hydroxy-tetrahydrodipicolinate (HTPA). The chain is 4-hydroxy-tetrahydrodipicolinate synthase from Aquifex aeolicus (strain VF5).